Consider the following 234-residue polypeptide: Large ribosomal subunit protein uL1 (234 aa).

This sequence belongs to the universal ribosomal protein uL1 family. In terms of assembly, part of the 50S ribosomal subunit.

Binds directly to 23S rRNA. The L1 stalk is quite mobile in the ribosome, and is involved in E site tRNA release. In terms of biological role, protein L1 is also a translational repressor protein, it controls the translation of the L11 operon by binding to its mRNA. This is Large ribosomal subunit protein uL1 from Vibrio atlanticus (strain LGP32) (Vibrio splendidus (strain Mel32)).